The chain runs to 128 residues: Mu-like prophage FluMu protein gp35 (128 aa).

The interval 53–87 is disordered; that stretch reads TETGSQEGGEGLSKEPAGSDEQKQLRADPPSTDLN.

The protein to phage Mu protein gp35. As to quaternary structure, monomer.

The chain is Mu-like prophage FluMu protein gp35 from Haemophilus influenzae (strain ATCC 51907 / DSM 11121 / KW20 / Rd).